A 704-amino-acid polypeptide reads, in one-letter code: Elongation factor G 1 (704 aa).

The region spanning 8 to 291 (ERYRNIGISA…AVIDYLPSPA (284 aa)) is the tr-type G domain. GTP contacts are provided by residues 17-24 (AHIDAGKT), 88-92 (DTPGH), and 142-145 (NKMD).

The protein belongs to the TRAFAC class translation factor GTPase superfamily. Classic translation factor GTPase family. EF-G/EF-2 subfamily.

It is found in the cytoplasm. In terms of biological role, catalyzes the GTP-dependent ribosomal translocation step during translation elongation. During this step, the ribosome changes from the pre-translocational (PRE) to the post-translocational (POST) state as the newly formed A-site-bound peptidyl-tRNA and P-site-bound deacylated tRNA move to the P and E sites, respectively. Catalyzes the coordinated movement of the two tRNA molecules, the mRNA and conformational changes in the ribosome. In Burkholderia mallei (strain ATCC 23344), this protein is Elongation factor G 1.